The chain runs to 471 residues: MIVADSECRAELKGYLPGAGEEQRESRVRRGPRGPSAFIPVEEVLQEGAESLEQHLGLEALMSSGRVDNLAVVMGLHPDYFTSFWRLHCLLLHTDGPLANSWRHYIAIMAAARHQCSYLVGSHMAEFLQTGGDPEWLLGLHRAPEKLRKLSEINKLLAHRPWLITKEHIQALLKTGEHSWSLAELIQALVLLTHCHSLASFVFGCGILPEGDPEGSPAPQAPSPPSEQSTPPSRDSLNHSGGFEAARDVEALMERMRQLQESLLQDEGASQEEMESRFELEKSESLLVTPSVDILEPFANPDMLCFVEDPTFGYEDFTRRGTQAPPTFRAQDYTWEDHGYSLIQRLYPEGGQLLDEKFQAAYSLTYNTIAMHSGVDTSVLRRAIWNYIHCVFGIRYDDYDYGEVNQLLERNLKVYIKTVACYPEKTTRRMYNHFWRHFRHSEKVHVNLLLLEARMQAALLYALRAITRYMT.

Position 1 is an N-acetylmethionine (methionine 1). Residues 57–230 are N-terminal domain; mediates the alkylhydroperoxide reductase activity; it reads GLEALMSSGR…APSPPSEQST (174 aa). Cysteine 116 (cysteine sulfenic acid (-SOH) intermediate) is an active-site residue. A Glycyl lysine isopeptide (Lys-Gly) (interchain with G-Cter in ubiquitin) cross-link involves residue lysine 166. The disordered stretch occupies residues 212–241; that stretch reads DPEGSPAPQAPSPPSEQSTPPSRDSLNHSG. At serine 240 the chain carries Phosphoserine. The tract at residues 299-471 is C-terminal domain; mediates TORC1 regulation; that stretch reads ANPDMLCFVE…ALRAITRYMT (173 aa). L-leucine contacts are provided by residues 365–368, threonine 377, and glutamate 442; that span reads TYNT.

The protein belongs to the sestrin family. As to quaternary structure, interacts with the GATOR2 complex which is composed of MIOS, SEC13, SEH1L, WDR24 and WDR59; the interaction is negatively regulated by leucine. Conveys leucine availability via direct interaction with SEH1L and WDR24 components of the GATOR2 complex. Interacts with RRAGA, RRAGB, RRAGC and RRAGD; may function as a guanine nucleotide dissociation inhibitor for RRAGs and regulate them. May interact with the TORC2 complex. Interacts with KEAP1, RBX1, SQSTM and ULK1; to regulate the degradation of KEAP1. May also associate with the complex composed of TSC1, TSC2 and the AMP-responsive protein kinase/AMPK to regulate TORC1 signaling. May interact with PRDX1. Post-translationally, phosphorylated by ULK1 at multiple sites. Ubiquitinated at Lys-166 by RNF167 via 'Lys-63'-linked polyubiquitination in response to leucine deprivation: ubiquitination promotes SESN2-interaction with the GATOR2 complex, leading to inhibit the TORC1 signaling pathway. Deubiquitinated at Lys-166 by STAMBPL1, promoting the TORC1 signaling pathway. Ubiquitinated by RNF186; ubiquitination mediates proteasomal degradation.

Its subcellular location is the cytoplasm. The enzyme catalyses a hydroperoxide + L-cysteinyl-[protein] = S-hydroxy-L-cysteinyl-[protein] + an alcohol. Its function is as follows. Functions as an intracellular leucine sensor that negatively regulates the mTORC1 signaling pathway through the GATOR complex. In absence of leucine, binds the GATOR subcomplex GATOR2 and prevents mTORC1 signaling. Binding of leucine to SESN2 disrupts its interaction with GATOR2 thereby activating the TORC1 signaling pathway. This stress-inducible metabolic regulator also plays a role in protection against oxidative and genotoxic stresses. May negatively regulate protein translation in response to endoplasmic reticulum stress, via mTORC1. May positively regulate the transcription by NFE2L2 of genes involved in the response to oxidative stress by facilitating the SQSTM1-mediated autophagic degradation of KEAP1. May also mediate TP53 inhibition of TORC1 signaling upon genotoxic stress. Moreover, may prevent the accumulation of reactive oxygen species (ROS) through the alkylhydroperoxide reductase activity born by the N-terminal domain of the protein. Was originally reported to contribute to oxidative stress resistance by reducing PRDX1. However, this could not be confirmed. The protein is Sestrin-2 of Bos taurus (Bovine).